Consider the following 73-residue polypeptide: Conotoxin CnIIIG (73 aa).

The signal sequence occupies residues Met1–Ala19. The propeptide occupies Leu20–Asp48. Gln51 carries the pyrrolidone carboxylic acid modification. 3 disulfides stabilise this stretch: Cys53–Cys72, Cys54–Cys70, and Cys60–Cys73.

It belongs to the conotoxin M superfamily. Expressed by the venom duct.

It localises to the secreted. Functionally, shows a paralytic effect in fish. The sequence is that of Conotoxin CnIIIG from Conus consors (Singed cone).